The chain runs to 84 residues: NAD(P)H-quinone oxidoreductase subunit O (84 aa).

This sequence belongs to the complex I NdhO subunit family. In terms of assembly, NDH-1 can be composed of about 15 different subunits; different subcomplexes with different compositions have been identified which probably have different functions.

It is found in the cellular thylakoid membrane. It carries out the reaction a plastoquinone + NADH + (n+1) H(+)(in) = a plastoquinol + NAD(+) + n H(+)(out). The enzyme catalyses a plastoquinone + NADPH + (n+1) H(+)(in) = a plastoquinol + NADP(+) + n H(+)(out). Functionally, NDH-1 shuttles electrons from an unknown electron donor, via FMN and iron-sulfur (Fe-S) centers, to quinones in the respiratory and/or the photosynthetic chain. The immediate electron acceptor for the enzyme in this species is believed to be plastoquinone. Couples the redox reaction to proton translocation, and thus conserves the redox energy in a proton gradient. Cyanobacterial NDH-1 also plays a role in inorganic carbon-concentration. This is NAD(P)H-quinone oxidoreductase subunit O from Synechococcus sp. (strain CC9902).